The chain runs to 94 residues: Small ribosomal subunit protein uS19 (94 aa).

It belongs to the universal ribosomal protein uS19 family.

In terms of biological role, protein S19 forms a complex with S13 that binds strongly to the 16S ribosomal RNA. This is Small ribosomal subunit protein uS19 from Dictyoglomus turgidum (strain DSM 6724 / Z-1310).